We begin with the raw amino-acid sequence, 186 residues long: Small ribosomal subunit protein uS7 (186 aa).

The protein belongs to the universal ribosomal protein uS7 family. As to quaternary structure, part of the 30S ribosomal subunit.

In terms of biological role, one of the primary rRNA binding proteins, it binds directly to 16S rRNA where it nucleates assembly of the head domain of the 30S subunit. Is located at the subunit interface close to the decoding center. The protein is Small ribosomal subunit protein uS7 of Methanothermobacter thermautotrophicus (strain ATCC 29096 / DSM 1053 / JCM 10044 / NBRC 100330 / Delta H) (Methanobacterium thermoautotrophicum).